Here is a 535-residue protein sequence, read N- to C-terminus: T-complex protein 1 subunit zeta (535 aa).

It belongs to the TCP-1 chaperonin family. In terms of assembly, heterooligomeric complex of about 850 to 900 kDa that forms two stacked rings, 12 to 16 nm in diameter.

The protein localises to the cytoplasm. In terms of biological role, molecular chaperone; assists the folding of proteins upon ATP hydrolysis. Known to play a role, in vitro, in the folding of actin and tubulin. This is T-complex protein 1 subunit zeta (cct6) from Schizosaccharomyces pombe (strain 972 / ATCC 24843) (Fission yeast).